The following is a 115-amino-acid chain: Dolichyl-diphosphooligosaccharide--protein glycosyltransferase subunit DAD1 (115 aa).

Over 1–31 (MVKSTSKDAQDLFRSLRSAYSATPTNLKIID) the chain is Cytoplasmic. Residues 32 to 52 (LYVVFAVFTALIQVVYMALVG) traverse the membrane as a helical segment. At 53–55 (SFP) the chain is on the lumenal side. A helical membrane pass occupies residues 56–76 (FNSFLSGVLSCIGTAVLAVCL). Residues 77-94 (RIQVNKENKEFKDLAPER) lie on the Cytoplasmic side of the membrane. The chain crosses the membrane as a helical span at residues 95-115 (AFADFVLCNLVLHLVIINFLG).

The protein belongs to the DAD/OST2 family. Component of the oligosaccharyltransferase (OST) complex. As to expression, ubiquitous.

It is found in the endoplasmic reticulum membrane. It functions in the pathway protein modification; protein glycosylation. In terms of biological role, subunit of the oligosaccharyl transferase (OST) complex that catalyzes the initial transfer of a defined glycan (Glc(3)Man(9)GlcNAc(2) in eukaryotes) from the lipid carrier dolichol-pyrophosphate to an asparagine residue within an Asn-X-Ser/Thr consensus motif in nascent polypeptide chains, the first step in protein N-glycosylation. N-glycosylation occurs cotranslationally and the complex associates with the Sec61 complex at the channel-forming translocon complex that mediates protein translocation across the endoplasmic reticulum (ER). All subunits are required for a maximal enzyme activity. The protein is Dolichyl-diphosphooligosaccharide--protein glycosyltransferase subunit DAD1 (DAD1) of Arabidopsis thaliana (Mouse-ear cress).